We begin with the raw amino-acid sequence, 644 residues long: Chaperone protein HscA (644 aa).

The protein belongs to the heat shock protein 70 family.

Chaperone involved in the maturation of iron-sulfur cluster-containing proteins. Has a low intrinsic ATPase activity which is markedly stimulated by HscB. Involved in the maturation of IscU. The polypeptide is Chaperone protein HscA (Yersinia pseudotuberculosis serotype I (strain IP32953)).